The primary structure comprises 367 residues: Aminomethyltransferase (367 aa).

This sequence belongs to the GcvT family. The glycine cleavage system is composed of four proteins: P, T, L and H.

The catalysed reaction is N(6)-[(R)-S(8)-aminomethyldihydrolipoyl]-L-lysyl-[protein] + (6S)-5,6,7,8-tetrahydrofolate = N(6)-[(R)-dihydrolipoyl]-L-lysyl-[protein] + (6R)-5,10-methylene-5,6,7,8-tetrahydrofolate + NH4(+). The glycine cleavage system catalyzes the degradation of glycine. The chain is Aminomethyltransferase from Mycobacterium leprae (strain Br4923).